A 45-amino-acid chain; its full sequence is DNA-directed RNA polymerase subunit Rpo12 (45 aa).

Cys-8, Cys-23, and Cys-26 together coordinate Zn(2+).

This sequence belongs to the archaeal Rpo12/eukaryotic RPC10 RNA polymerase subunit family. As to quaternary structure, part of the RNA polymerase complex. It depends on Zn(2+) as a cofactor.

It localises to the cytoplasm. It catalyses the reaction RNA(n) + a ribonucleoside 5'-triphosphate = RNA(n+1) + diphosphate. In terms of biological role, DNA-dependent RNA polymerase (RNAP) catalyzes the transcription of DNA into RNA using the four ribonucleoside triphosphates as substrates. This chain is DNA-directed RNA polymerase subunit Rpo12, found in Methanothrix thermoacetophila (strain DSM 6194 / JCM 14653 / NBRC 101360 / PT) (Methanosaeta thermophila).